The chain runs to 792 residues: Chloride channel protein CLC-d (792 aa).

The next 12 helical transmembrane spans lie at 78-98 (FFSL…NLSV), 119-139 (AGFI…AYII), 170-190 (RTLI…LALG), 195-215 (LVHT…TKYH), 237-257 (GCAA…LFAL), 267-287 (QLMW…RTAM), 320-340 (LLPM…FNQL), 361-381 (IIEA…LPLL), 451-471 (LLTF…TAVP), 474-494 (QFVP…MFVV), 508-528 (ALLG…SLCV), and 529-549 (IMVE…VLLI). CBS domains lie at 592–652 (QSQK…KVDF) and 704–761 (LNPS…SSAV). A helical transmembrane segment spans residues 731–751 (HLFVVPRPSRVIGLITRKDLL).

This sequence belongs to the chloride channel (TC 2.A.49) family. Homodimer. Broadly expressed in the plant, but predominantly in the silique.

Its subcellular location is the membrane. In terms of biological role, voltage-gated chloride channel. The protein is Chloride channel protein CLC-d (CLC-D) of Arabidopsis thaliana (Mouse-ear cress).